Consider the following 166-residue polypeptide: NADPH-dependent 7-cyano-7-deazaguanine reductase (166 aa).

Catalysis depends on Cys57, which acts as the Thioimide intermediate. Residue Asp64 is the Proton donor of the active site. Residues Val79 to Ser81 and His98 to Glu99 each bind substrate.

It belongs to the GTP cyclohydrolase I family. QueF type 1 subfamily.

The protein localises to the cytoplasm. The catalysed reaction is 7-aminomethyl-7-carbaguanine + 2 NADP(+) = 7-cyano-7-deazaguanine + 2 NADPH + 3 H(+). The protein operates within tRNA modification; tRNA-queuosine biosynthesis. In terms of biological role, catalyzes the NADPH-dependent reduction of 7-cyano-7-deazaguanine (preQ0) to 7-aminomethyl-7-deazaguanine (preQ1). The sequence is that of NADPH-dependent 7-cyano-7-deazaguanine reductase from Staphylococcus epidermidis (strain ATCC 35984 / DSM 28319 / BCRC 17069 / CCUG 31568 / BM 3577 / RP62A).